Consider the following 200-residue polypeptide: Cytochrome c biogenesis ATP-binding export protein CcmA (200 aa).

The 198-residue stretch at 3-200 folds into the ABC transporter domain; that stretch reads LSGRGLRCVR…AREMRIGAAA (198 aa). Residue 35 to 42 participates in ATP binding; that stretch reads GHNGAGKT.

This sequence belongs to the ABC transporter superfamily. CcmA exporter (TC 3.A.1.107) family. The complex is composed of two ATP-binding proteins (CcmA) and two transmembrane proteins (CcmB).

It is found in the cell inner membrane. It catalyses the reaction heme b(in) + ATP + H2O = heme b(out) + ADP + phosphate + H(+). In terms of biological role, part of the ABC transporter complex CcmAB involved in the biogenesis of c-type cytochromes; once thought to export heme, this seems not to be the case, but its exact role is uncertain. Responsible for energy coupling to the transport system. In Rhodopseudomonas palustris (strain BisB5), this protein is Cytochrome c biogenesis ATP-binding export protein CcmA.